The primary structure comprises 276 residues: Urease accessory protein UreD (276 aa).

This sequence belongs to the UreD family. UreD, UreF and UreG form a complex that acts as a GTP-hydrolysis-dependent molecular chaperone, activating the urease apoprotein by helping to assemble the nickel containing metallocenter of UreC. The UreE protein probably delivers the nickel.

The protein resides in the cytoplasm. Required for maturation of urease via the functional incorporation of the urease nickel metallocenter. This Polaromonas naphthalenivorans (strain CJ2) protein is Urease accessory protein UreD.